An 82-amino-acid polypeptide reads, in one-letter code: Cytochrome b559 subunit alpha (82 aa).

Residues Ile-22 to Phe-36 form a helical membrane-spanning segment. His-24 lines the heme pocket.

This sequence belongs to the PsbE/PsbF family. In terms of assembly, heterodimer of an alpha subunit and a beta subunit. PSII is composed of 1 copy each of membrane proteins PsbA, PsbB, PsbC, PsbD, PsbE, PsbF, PsbH, PsbI, PsbJ, PsbK, PsbL, PsbM, PsbT, PsbX, PsbY, Psb30/Ycf12, peripheral proteins PsbO, CyanoQ (PsbQ), PsbU, PsbV and a large number of cofactors. It forms dimeric complexes. Requires heme b as cofactor.

It localises to the cellular thylakoid membrane. This b-type cytochrome is tightly associated with the reaction center of photosystem II (PSII). PSII is a light-driven water:plastoquinone oxidoreductase that uses light energy to abstract electrons from H(2)O, generating O(2) and a proton gradient subsequently used for ATP formation. It consists of a core antenna complex that captures photons, and an electron transfer chain that converts photonic excitation into a charge separation. The protein is Cytochrome b559 subunit alpha of Prochlorococcus marinus (strain NATL1A).